The sequence spans 357 residues: Arginine kinase (357 aa).

The Phosphagen kinase N-terminal domain occupies 9 to 91; that stretch reads KLEAGFKKLQ…FDPIIDDYHG (83 aa). 64–68 serves as a coordination point for substrate; that stretch reads GVGIY. The Phosphagen kinase C-terminal domain occupies 119–356; the sequence is FIISTRVRCG…LEMIKMEKAA (238 aa). ATP is bound by residues 122-126 and His-185; that span reads STRVR. Glu-225 contributes to the substrate binding site. Arg-229 provides a ligand contact to ATP. Cys-271 contacts substrate. ATP-binding positions include 280-284 and 309-314; these read RASVH and RGTRGE. Residue Glu-314 participates in substrate binding.

This sequence belongs to the ATP:guanido phosphotransferase family. As to quaternary structure, monomer.

The protein localises to the cytoplasm. It carries out the reaction L-arginine + ATP = N(omega)-phospho-L-arginine + ADP + H(+). In terms of biological role, catalyzes the reversible transfer of the terminal phosphoryl group of ATP to L-arginine. This Limulus polyphemus (Atlantic horseshoe crab) protein is Arginine kinase.